A 465-amino-acid chain; its full sequence is Ribosomal oxygenase 2 (465 aa).

A JmjC domain is found at 139-271 (QPQRYKDELW…NSWGDCLLDS (133 aa)). Histidine 179, aspartate 181, and histidine 240 together coordinate Fe cation. Serine 309 is modified (phosphoserine).

The protein belongs to the ROX family. MINA53 subfamily. Requires Fe(2+) as cofactor. As to expression, predominantly expressed in testis. Expressed at high levels in spleen, thymus, and colon, but barely detectable in brain, skeletal muscle, and seminal vesicle (at protein level).

Its subcellular location is the nucleus. The protein resides in the nucleolus. The enzyme catalyses L-histidyl-[ribosomal protein uL15] + 2-oxoglutarate + O2 = (3S)-3-hydroxy-L-histidyl-[ribosomal protein uL15] + succinate + CO2. It carries out the reaction L-histidyl-[protein] + 2-oxoglutarate + O2 = (3S)-3-hydroxy-L-histidyl-[protein] + succinate + CO2. Its function is as follows. Oxygenase that can act as both a histone lysine demethylase and a ribosomal histidine hydroxylase. Is involved in the demethylation of trimethylated 'Lys-9' on histone H3 (H3K9me3), leading to an increase in ribosomal RNA expression. Also catalyzes the hydroxylation of 60S ribosomal protein L27a on 'His-39'. May play an important role in cell growth and survival. May be involved in ribosome biogenesis, most likely during the assembly process of pre-ribosomal particles. This Mus musculus (Mouse) protein is Ribosomal oxygenase 2.